We begin with the raw amino-acid sequence, 130 residues long: Small ribosomal subunit protein uS11 (130 aa).

The protein belongs to the universal ribosomal protein uS11 family. As to quaternary structure, part of the 30S ribosomal subunit. Interacts with proteins S7 and S18. Binds to IF-3.

Located on the platform of the 30S subunit, it bridges several disparate RNA helices of the 16S rRNA. Forms part of the Shine-Dalgarno cleft in the 70S ribosome. This Synechococcus sp. (strain CC9902) protein is Small ribosomal subunit protein uS11.